Here is a 454-residue protein sequence, read N- to C-terminus: tRNA modification GTPase MnmE (454 aa).

(6S)-5-formyl-5,6,7,8-tetrahydrofolate contacts are provided by Arg23, Glu80, and Lys120. One can recognise a TrmE-type G domain in the interval 216-377 (GMKVVIAGRP…LRNHLKQSMG (162 aa)). Residue Asn226 coordinates K(+). GTP-binding positions include 226 to 231 (NAGKSS), 245 to 251 (TDIAGTT), 270 to 273 (DTAG), 335 to 338 (NKAD), and 358 to 360 (SAR). Residue Ser230 coordinates Mg(2+). Residues Thr245, Ile247, and Thr250 each coordinate K(+). Thr251 is a binding site for Mg(2+). Position 454 (Lys454) interacts with (6S)-5-formyl-5,6,7,8-tetrahydrofolate.

Belongs to the TRAFAC class TrmE-Era-EngA-EngB-Septin-like GTPase superfamily. TrmE GTPase family. As to quaternary structure, homodimer. Heterotetramer of two MnmE and two MnmG subunits. K(+) is required as a cofactor.

The protein localises to the cytoplasm. Functionally, exhibits a very high intrinsic GTPase hydrolysis rate. Involved in the addition of a carboxymethylaminomethyl (cmnm) group at the wobble position (U34) of certain tRNAs, forming tRNA-cmnm(5)s(2)U34. The sequence is that of tRNA modification GTPase MnmE from Escherichia coli O7:K1 (strain IAI39 / ExPEC).